A 362-amino-acid polypeptide reads, in one-letter code: Chorismate synthase (362 aa).

Arg-48 is an NADP(+) binding site. Residues 131–133, 243–244, Gly-288, 303–307, and Arg-329 each bind FMN; these read RAS, NA, and KPTSS.

Belongs to the chorismate synthase family. As to quaternary structure, homotetramer. It depends on FMNH2 as a cofactor.

It catalyses the reaction 5-O-(1-carboxyvinyl)-3-phosphoshikimate = chorismate + phosphate. Its pathway is metabolic intermediate biosynthesis; chorismate biosynthesis; chorismate from D-erythrose 4-phosphate and phosphoenolpyruvate: step 7/7. Functionally, catalyzes the anti-1,4-elimination of the C-3 phosphate and the C-6 proR hydrogen from 5-enolpyruvylshikimate-3-phosphate (EPSP) to yield chorismate, which is the branch point compound that serves as the starting substrate for the three terminal pathways of aromatic amino acid biosynthesis. This reaction introduces a second double bond into the aromatic ring system. The polypeptide is Chorismate synthase (Bartonella tribocorum (strain CIP 105476 / IBS 506)).